The chain runs to 108 residues: UPF0060 membrane protein DSY4157 (108 aa).

The next 4 helical transmembrane spans lie at 6–26, 31–51, 60–80, and 86–106; these read ILFI…WLWL, PYWY…IPTL, VYAA…WGVD, and TYDW…LWAP.

It belongs to the UPF0060 family.

It is found in the cell membrane. This is UPF0060 membrane protein DSY4157 from Desulfitobacterium hafniense (strain Y51).